Here is a 363-residue protein sequence, read N- to C-terminus: Phosphoribosylformylglycinamidine cyclo-ligase (363 aa).

The protein belongs to the AIR synthase family.

The protein localises to the cytoplasm. It carries out the reaction 2-formamido-N(1)-(5-O-phospho-beta-D-ribosyl)acetamidine + ATP = 5-amino-1-(5-phospho-beta-D-ribosyl)imidazole + ADP + phosphate + H(+). It functions in the pathway purine metabolism; IMP biosynthesis via de novo pathway; 5-amino-1-(5-phospho-D-ribosyl)imidazole from N(2)-formyl-N(1)-(5-phospho-D-ribosyl)glycinamide: step 2/2. This chain is Phosphoribosylformylglycinamidine cyclo-ligase, found in Brucella anthropi (strain ATCC 49188 / DSM 6882 / CCUG 24695 / JCM 21032 / LMG 3331 / NBRC 15819 / NCTC 12168 / Alc 37) (Ochrobactrum anthropi).